The following is a 924-amino-acid chain: Ubiquitin carboxyl-terminal hydrolase 15 (924 aa).

Zn(2+)-binding residues include C130, C133, C141, C144, C150, C154, H163, and C167. An MYND-type zinc finger spans residues 130-167 (CARCFGPAKTRCSRCKSVRYCSGKCQIIHWRVAHKDEC). Residues 226–236 (DITPQINTQGR) show a composition bias toward polar residues. Disordered regions lie at residues 226-301 (DITP…VDSS) and 317-366 (SHKH…TSKK). The segment covering 247–256 (ANRESCRRDS) has biased composition (basic and acidic residues). The segment covering 331-362 (GCPNTQYPSNGTRTATLPRTGINKSGEQSCTE) has biased composition (polar residues). The USP domain occupies 438–744 (RGLVNCGNSC…GAYMLFYMRS (307 aa)). The active-site Nucleophile is the C447. Catalysis depends on H703, which acts as the Proton acceptor. The interval 750–793 (RGEHNGKAPVHHSQPRNEMKEQRKPVNRFKPRADHKNTESSSSE) is disordered. The segment covering 764–773 (PRNEMKEQRK) has biased composition (basic and acidic residues).

It belongs to the peptidase C19 family. Interacts with DA1. Highly expressed in rosette leaves and inflorescence. Expressed at low levels in cotyledons, stems, cauline leaves and siliques.

The protein resides in the cytoplasm. Its subcellular location is the nucleus. It carries out the reaction Thiol-dependent hydrolysis of ester, thioester, amide, peptide and isopeptide bonds formed by the C-terminal Gly of ubiquitin (a 76-residue protein attached to proteins as an intracellular targeting signal).. Recognizes and hydrolyzes the peptide bond at the C-terminal Gly of ubiquitin. Involved in the processing of poly-ubiquitin precursors as well as that of ubiquitinated proteins. Involved in the regulation of organ size. Acts as a positive regulator of cell proliferation. Possesses deubiquitinating enzyme activity in vitro. The enzyme activity of UBP15 is required for its function in regulation of cell proliferation. Functions antagonistically in a common pathway with DA1 to regulate seed size. Acts maternally to regulate seed size by promoting cell proliferation in the integuments of ovules and developing seeds. Functions independently of DA2 and BB. This is Ubiquitin carboxyl-terminal hydrolase 15 from Arabidopsis thaliana (Mouse-ear cress).